We begin with the raw amino-acid sequence, 421 residues long: Signal recognition particle receptor FtsY (421 aa).

Residues 228-235, 309-313, and 373-376 each bind GTP; these read GINGAGKT, DTAGR, and TKLD.

It belongs to the GTP-binding SRP family. FtsY subfamily. Part of the signal recognition particle protein translocation system, which is composed of SRP and FtsY. SRP is a ribonucleoprotein composed of Ffh and a 4.5S RNA molecule.

The protein resides in the cell inner membrane. It is found in the cytoplasm. The catalysed reaction is GTP + H2O = GDP + phosphate + H(+). In terms of biological role, involved in targeting and insertion of nascent membrane proteins into the cytoplasmic membrane. Acts as a receptor for the complex formed by the signal recognition particle (SRP) and the ribosome-nascent chain (RNC). Interaction with SRP-RNC leads to the transfer of the RNC complex to the Sec translocase for insertion into the membrane, the hydrolysis of GTP by both Ffh and FtsY, and the dissociation of the SRP-FtsY complex into the individual components. The chain is Signal recognition particle receptor FtsY from Neisseria meningitidis serogroup B (strain ATCC BAA-335 / MC58).